A 423-amino-acid chain; its full sequence is CinA-like protein (423 aa).

The protein belongs to the CinA family.

The sequence is that of CinA-like protein from Prochlorococcus marinus (strain SARG / CCMP1375 / SS120).